A 196-amino-acid polypeptide reads, in one-letter code: Holliday junction branch migration complex subunit RuvA (196 aa).

Residues 1-63 (MINKIYGKII…EDEIKLFGFL (63 aa)) form a domain I region. Positions 64–138 (NVSEREVFEE…GKLVKADELT (75 aa)) are domain II. Residue Thr138 is a region of interest, flexible linker. The tract at residues 139–196 (SSVFKFKDLEQSIVNMGFDRKLVVAAIKEIMLIDEFLMLREVEQEQFLFRETLKRLSG) is domain III.

It belongs to the RuvA family. Homotetramer. Forms an RuvA(8)-RuvB(12)-Holliday junction (HJ) complex. HJ DNA is sandwiched between 2 RuvA tetramers; dsDNA enters through RuvA and exits via RuvB. An RuvB hexamer assembles on each DNA strand where it exits the tetramer. Each RuvB hexamer is contacted by two RuvA subunits (via domain III) on 2 adjacent RuvB subunits; this complex drives branch migration. In the full resolvosome a probable DNA-RuvA(4)-RuvB(12)-RuvC(2) complex forms which resolves the HJ.

It localises to the cytoplasm. The RuvA-RuvB-RuvC complex processes Holliday junction (HJ) DNA during genetic recombination and DNA repair, while the RuvA-RuvB complex plays an important role in the rescue of blocked DNA replication forks via replication fork reversal (RFR). RuvA specifically binds to HJ cruciform DNA, conferring on it an open structure. The RuvB hexamer acts as an ATP-dependent pump, pulling dsDNA into and through the RuvAB complex. HJ branch migration allows RuvC to scan DNA until it finds its consensus sequence, where it cleaves and resolves the cruciform DNA. The protein is Holliday junction branch migration complex subunit RuvA of Borrelia hermsii (strain HS1 / DAH).